A 704-amino-acid polypeptide reads, in one-letter code: Elongation factor G (704 aa).

A tr-type G domain is found at 8-290 (ARYRNIGISA…AVVDYLPSPV (283 aa)). Residues 17 to 24 (AHIDAGKT), 88 to 92 (DTPGH), and 142 to 145 (NKMD) each bind GTP.

The protein belongs to the TRAFAC class translation factor GTPase superfamily. Classic translation factor GTPase family. EF-G/EF-2 subfamily.

It localises to the cytoplasm. Its function is as follows. Catalyzes the GTP-dependent ribosomal translocation step during translation elongation. During this step, the ribosome changes from the pre-translocational (PRE) to the post-translocational (POST) state as the newly formed A-site-bound peptidyl-tRNA and P-site-bound deacylated tRNA move to the P and E sites, respectively. Catalyzes the coordinated movement of the two tRNA molecules, the mRNA and conformational changes in the ribosome. The protein is Elongation factor G of Pectobacterium carotovorum subsp. carotovorum (strain PC1).